The following is an 843-amino-acid chain: OTU domain-containing protein 7B (843 aa).

Positions 50–88 (GNLPPSFSEGSGGSRTPEKGFSDREPTRPPRPILQRQDD) are disordered. Residues 65–77 (TPEKGFSDREPTR) show a composition bias toward basic and acidic residues. Ser100 carries the phosphoserine modification. The tract at residues 152 to 401 (ERDLIEQSML…AVDPGKGWEW (250 aa)) is TRAF-binding. The catalytic stretch occupies residues 167–440 (AGRLNWWVSV…VKWIPLSSDA (274 aa)). The region spanning 183 to 365 (LLPLATTGDG…QAHFSALVSM (183 aa)) is the OTU domain. A regulatory loop region spans residues 187–193 (ATTGDGN). Asp191 is an active-site residue. Cys194 (nucleophile) is an active-site residue. His358 functions as the Proton acceptor in the catalytic mechanism. Disordered regions lie at residues 442-587 (APLA…GGSK) and 652-711 (IMNG…CQEP). Basic and acidic residues-rich tracts occupy residues 456 to 471 (DEPR…DKES) and 488 to 500 (SKRD…KRAD). Residues Ser464, Ser467, and Ser471 each carry the phosphoserine modification. The Nuclear localization signal motif lies at 483-498 (RRKEKSKRDREKDKKR). A compositionally biased stretch (gly residues) spans 531-543 (KPGGVGTGLGGSS). Residues 665 to 675 (KKPEPDAREEQ) show a composition bias toward basic and acidic residues. Thr729 bears the Phosphothreonine mark. Residues 732–792 (RQCPPGRPYP…PEPDGWAGGL (61 aa)) form a disordered region. The segment at 796 to 831 (PPTQTKCKQPNCSFYGHPETNNFCSCCYREELRRRE) adopts an A20-type zinc-finger fold. Cys802, Cys807, Cys819, and Cys822 together coordinate Zn(2+).

It belongs to the peptidase C64 family. As to quaternary structure, interacts with ZAP70 in activated T cells, but not in resting T cells. Interacts with TRAF3. Interacts with TRAF6. Interacts with PARK7, leading to inhibit deubiquitinase activity. Interacts with EGFR, ITCH and NEDD4. Post-translationally, phosphorylated by EGFR. As to expression, widely expressed. Abundant in kidney, heart and fetal liver. Expressed differentially among B-cells at distinct developmental stages. Higher expression seen in primary immature B-cells as compared to the mature cells.

It localises to the cytoplasm. It is found in the nucleus. It carries out the reaction Thiol-dependent hydrolysis of ester, thioester, amide, peptide and isopeptide bonds formed by the C-terminal Gly of ubiquitin (a 76-residue protein attached to proteins as an intracellular targeting signal).. With respect to regulation, deubiquitinase activity is inhibited following interaction with PARK7. Negative regulator of the non-canonical NF-kappa-B pathway that acts by mediating deubiquitination of TRAF3, an inhibitor of the NF-kappa-B pathway, thereby acting as a negative regulator of B-cell responses. In response to non-canonical NF-kappa-B stimuli, deubiquitinates 'Lys-48'-linked polyubiquitin chains of TRAF3, preventing TRAF3 proteolysis and over-activation of non-canonical NF-kappa-B. Negatively regulates mucosal immunity against infections. Deubiquitinates ZAP70, and thereby regulates T cell receptor (TCR) signaling that leads to the activation of NF-kappa-B. Plays a role in T cell homeostasis and is required for normal T cell responses, including production of IFNG and IL2. Mediates deubiquitination of EGFR. Has deubiquitinating activity toward 'Lys-11', 'Lys-48' and 'Lys-63'-linked polyubiquitin chains. Has a much higher catalytic rate with 'Lys-11'-linked polyubiquitin chains (in vitro); however the physiological significance of these data are unsure. Hydrolyzes both linear and branched forms of polyubiquitin. Acts as a regulator of mTORC1 and mTORC2 assembly by mediating 'Lys-63'-linked deubiquitination of MLST8, thereby promoting assembly of the mTORC2 complex, while inibiting formation of the mTORC1 complex. In Homo sapiens (Human), this protein is OTU domain-containing protein 7B (OTUD7B).